We begin with the raw amino-acid sequence, 746 residues long: tRNA(Met) cytidine acetyltransferase TmcA (746 aa).

Residues 181–200 are disordered; sequence ARAETGGNPPSPGDSACRTE. ATP contacts are provided by residues Gln-202, 228 to 237, and Arg-370; that span reads GRGKSAALGI. An N-acetyltransferase domain is found at 405-617; sequence VAVERLDRDA…VHLPHQLADP (213 aa). Acetyl-CoA contacts are provided by residues 517-519, 524-530, Glu-557, and Arg-564; these read IAV and QGQGLGT.

This sequence belongs to the RNA cytidine acetyltransferase family. TmcA subfamily.

Its subcellular location is the cytoplasm. The enzyme catalyses cytidine(34) in elongator tRNA(Met) + acetyl-CoA + ATP + H2O = N(4)-acetylcytidine(34) in elongator tRNA(Met) + ADP + phosphate + CoA + H(+). Its function is as follows. Catalyzes the formation of N(4)-acetylcytidine (ac(4)C) at the wobble position of tRNA(Met), by using acetyl-CoA as an acetyl donor and ATP (or GTP). This Nitrosococcus halophilus (strain Nc4) protein is tRNA(Met) cytidine acetyltransferase TmcA.